The primary structure comprises 428 residues: MTGKSVKDVDRYQAVLANLLLEEDNKFCADCQSKGPRWASWNIGVFICIRCAGIHRNLGVHISRVKSVNLDQWTQEQIQCMQEMGNGKANRLYEAYLPETFRRPQIDPAVEGFIRDKYEKKKYMDRSLDINVLRKEKDDKWKRGNEPAPEKKMEPVVFEKVKMPQKKEDAQLPRKSSPKSAAPVMDLLGLDAPVACSIANSKTSNALEKDLDLLASVPSPSSVSRKAVGSMPTAGSAGSVPENLNLFPEPGSKSEETGKKQLSKDSILSLYGSQTPQMPAQAMFMAPAQMAYPTAYPSFPGVTPPNSIMGGMVPPPVGMVAQPGASGMLTPMAMPAGYMGGMQASMMGVPNGMMTTQQAGYMASMAAMPQTVYGVQPAQQLQWNLTQMTQQMAGMNFYGANGMMNYGQSMGGGNGQAANQTLSPQMWK.

One can recognise an Arf-GAP domain in the interval 13 to 139; it reads QAVLANLLLE…INVLRKEKDD (127 aa). The C4-type zinc finger occupies 28–51; the sequence is CADCQSKGPRWASWNIGVFICIRC. Phosphoserine is present on residues S127, S219, S224, S230, and S239. The interval 163–231 is interaction with clathrin heavy chains; sequence MPQKKEDAQL…SVSRKAVGSM (69 aa). Residues 218–262 form a disordered region; it reads PSPSSVSRKAVGSMPTAGSAGSVPENLNLFPEPGSKSEETGKKQL. Positions 252–262 are enriched in basic and acidic residues; that stretch reads SKSEETGKKQL. The tract at residues 339 to 428 is interaction with PICALM; sequence MGGMQASMMG…NQTLSPQMWK (90 aa).

In terms of assembly, interacts with ARF1. Interacts with PICALM and clathrin heavy chains.

The protein resides in the cytoplasm. Its function is as follows. GTPase activating protein that acts on ARF1. Can also activate ARF6 (in vitro). May play a role in clathrin-dependent retrograde transport from early endosomes to the trans-Golgi network. The polypeptide is Stromal membrane-associated protein 2 (Smap2) (Mus musculus (Mouse)).